The primary structure comprises 739 residues: Polyribonucleotide nucleotidyltransferase (739 aa).

Mg(2+) contacts are provided by D489 and D495. The region spanning 556 to 615 is the KH domain; the sequence is PKIDTIKIDVDKIKIVIGKGGETIDKIIAETGVKIDIDEDGLVAIFSPDRAAIERTKEII. Positions 625 to 693 constitute an S1 motif domain; it reads DEVFQAKVVR…DKGRIDASMK (69 aa). Residues 699-739 are disordered; sequence PEGYVEPEKRERSEKPRRHKEHKEKKDNNFGEFKFHKVDKK. Positions 722-739 are enriched in basic and acidic residues; it reads EKKDNNFGEFKFHKVDKK.

This sequence belongs to the polyribonucleotide nucleotidyltransferase family. The cofactor is Mg(2+).

The protein resides in the cytoplasm. The catalysed reaction is RNA(n+1) + phosphate = RNA(n) + a ribonucleoside 5'-diphosphate. In terms of biological role, involved in mRNA degradation. Catalyzes the phosphorolysis of single-stranded polyribonucleotides processively in the 3'- to 5'-direction. The polypeptide is Polyribonucleotide nucleotidyltransferase (Streptococcus suis (strain 98HAH33)).